Consider the following 119-residue polypeptide: Large ribosomal subunit protein bL20c (119 aa).

The protein belongs to the bacterial ribosomal protein bL20 family.

It localises to the plastid. The protein localises to the chloroplast. Its function is as follows. Binds directly to 23S ribosomal RNA and is necessary for the in vitro assembly process of the 50S ribosomal subunit. It is not involved in the protein synthesizing functions of that subunit. The sequence is that of Large ribosomal subunit protein bL20c (rpl20) from Zea mays (Maize).